The primary structure comprises 111 residues: TKKMSEILKAEDIDKALNTFKEAGSFDHHKFFNLVGLKGKPDDTLKEVFGILDQDKSGYIEEEELKFVLKGFAAGGRELTANETKALLKAGDQDGDDKIGVDEFTNLVKAA.

An N-acetylthreonine; in form C2 modification is found at Thr-1. EF-hand domains lie at 40–75 and 79–111; these read KPDDTLKEVFGILDQDKSGYIEEEELKFVLKGFAAG and LTANETKALLKAGDQDGDDKIGVDEFTNLVKAA. Residues Asp-53, Asp-55, Ser-57, Tyr-59, Glu-61, Glu-64, Asp-92, Asp-94, Asp-96, Lys-98, and Glu-103 each contribute to the Ca(2+) site.

Belongs to the parvalbumin family. Post-translationally, acetylation of Thr-1 converts C1 to C2.

Its function is as follows. In muscle, parvalbumin is thought to be involved in relaxation after contraction. It binds two calcium ions. This Latimeria chalumnae (Coelacanth) protein is Parvalbumin alpha.